The following is a 1307-amino-acid chain: Rab3 GTPase-activating protein regulatory subunit (1307 aa).

It belongs to the Rab3-GAP regulatory subunit family. In terms of assembly, the Rab3 GTPase-activating complex is a heterodimer composed of rbg-1 and rbg-2.

The protein resides in the cytoplasm. In terms of biological role, probable regulatory subunit of a GTPase activating protein that has specificity for Rab3 subfamily. Rab3 proteins are involved in regulated exocytosis of neurotransmitters and hormones. Rab3 GTPase-activating complex specifically converts active Rab3-GTP to the inactive form Rab3-GDP. The protein is Rab3 GTPase-activating protein regulatory subunit (rbg-2) of Caenorhabditis elegans.